A 51-amino-acid chain; its full sequence is Cytochrome b559 subunit beta (51 aa).

A helical transmembrane segment spans residues 26 to 42 (WLAVHALAVPTVFFIGS). His30 contributes to the heme binding site.

This sequence belongs to the PsbE/PsbF family. As to quaternary structure, heterodimer of an alpha subunit and a beta subunit. PSII is composed of 1 copy each of membrane proteins PsbA, PsbB, PsbC, PsbD, PsbE, PsbF, PsbH, PsbI, PsbJ, PsbK, PsbL, PsbM, PsbT, PsbY, PsbZ, Psb30/Ycf12, at least 3 peripheral proteins of the oxygen-evolving complex and a large number of cofactors. It forms dimeric complexes. Requires heme b as cofactor.

It is found in the plastid. It localises to the chloroplast thylakoid membrane. Its function is as follows. This b-type cytochrome is tightly associated with the reaction center of photosystem II (PSII). PSII is a light-driven water:plastoquinone oxidoreductase that uses light energy to abstract electrons from H(2)O, generating O(2) and a proton gradient subsequently used for ATP formation. It consists of a core antenna complex that captures photons, and an electron transfer chain that converts photonic excitation into a charge separation. The protein is Cytochrome b559 subunit beta of Bigelowiella natans (Pedinomonas minutissima).